The chain runs to 209 residues: Orotate phosphoribosyltransferase (209 aa).

Residues arginine 96, lysine 100, histidine 102, and 122–130 (EDLISTGGS) contribute to the 5-phospho-alpha-D-ribose 1-diphosphate site. Residue serine 126 coordinates orotate.

This sequence belongs to the purine/pyrimidine phosphoribosyltransferase family. PyrE subfamily. In terms of assembly, homodimer. Requires Mg(2+) as cofactor.

The enzyme catalyses orotidine 5'-phosphate + diphosphate = orotate + 5-phospho-alpha-D-ribose 1-diphosphate. Its pathway is pyrimidine metabolism; UMP biosynthesis via de novo pathway; UMP from orotate: step 1/2. Its function is as follows. Catalyzes the transfer of a ribosyl phosphate group from 5-phosphoribose 1-diphosphate to orotate, leading to the formation of orotidine monophosphate (OMP). The polypeptide is Orotate phosphoribosyltransferase (Lactococcus lactis subsp. lactis (strain IL1403) (Streptococcus lactis)).